We begin with the raw amino-acid sequence, 618 residues long: Chaperone protein dnaK (618 aa).

The segment at 595 to 618 is disordered; the sequence is SKTETTTPNKNEEDVIDASFSEEK.

It belongs to the heat shock protein 70 family.

The protein localises to the plastid. It localises to the cyanelle. In terms of biological role, acts as a chaperone. The polypeptide is Chaperone protein dnaK (dnaK-A) (Cyanophora paradoxa).